The following is an 843-amino-acid chain: Potassium transporter 10 (843 aa).

The span at 1–15 (MKSPSPVDPESPSSP) shows a compositional bias: low complexity. Residues 1-25 (MKSPSPVDPESPSSPDCKGGSSSKR) are disordered. Topologically, residues 1-34 (MKSPSPVDPESPSSPDCKGGSSSKRRRLPWRMTM) are cytoplasmic. Residues 35 to 55 (SLAYQSLGVVYGDLSTSPLYV) form a helical membrane-spanning segment. The Vacuolar segment spans residues 56–72 (YKAAFAEDIQHSETNEE). A helical membrane pass occupies residues 73–93 (ILGVLSFVFWTLTLVPLLKYV). Residues 94-183 (CVVLRADDNG…LLERHKVLQR (90 aa)) lie on the Cytoplasmic side of the membrane. A helical transmembrane segment spans residues 184–204 (VLLVLALVGTCMVIGDGVLTP). The Vacuolar segment spans residues 205 to 225 (AISVFSAVSGLELSMEKHQHK). Residues 226–246 (YVEVPIACFVLVCLFCLQHYG) form a helical membrane-spanning segment. At 247–249 (THR) the chain is on the cytoplasmic side. A helical membrane pass occupies residues 250-270 (VGFLFAPIVITWLLCISMIGV). Residues 271–298 (YNIVHWEPNVYRALSPYYMYKFLKKTQR) lie on the Vacuolar side of the membrane. The chain crosses the membrane as a helical span at residues 299 to 319 (GGWMSLGGILLCITGSEAMFA). Over 320 to 326 (DLGHFNQ) the chain is Cytoplasmic. A helical transmembrane segment spans residues 327-347 (LSIQIAFTCMVYPSLILAYMG). Topologically, residues 348–377 (QAAYLCKHHIIESDYRIGFYVSVPEKIRWP) are vacuolar. Residues 378–398 (VLAIAILAAVVGSQAVITGTF) traverse the membrane as a helical segment. Residues 399–425 (SMIKQCTALGCFPRVKIVHTSDKVHGQ) are Cytoplasmic-facing. A helical membrane pass occupies residues 426 to 446 (IYIPEINWILMILCLAITIGF). Residues 447-451 (RDTKH) lie on the Vacuolar side of the membrane. The chain crosses the membrane as a helical span at residues 452–472 (LGNASGLAVITVMLVTTCLMS). Topologically, residues 473–482 (LVIVLCWHKS) are cytoplasmic. A helical transmembrane segment spans residues 483-505 (IFLAFGFIIFFGTIEALYFSASL). Residues 506-510 (IKFRE) lie on the Vacuolar side of the membrane. The chain crosses the membrane as a helical span at residues 511-531 (GAWVPIVLAFIFMAIMCIWHY). The Cytoplasmic portion of the chain corresponds to 532 to 843 (GTIKKYEFDL…TLEVGMIYYV (312 aa)). The segment at 667 to 747 (AASSKPKNVC…IMSPSPSPPP (81 aa)) is disordered. The span at 718–735 (GGSGSGSGRGSSRGGGGA) shows a compositional bias: gly residues.

The protein belongs to the HAK/KUP transporter (TC 2.A.72.3) family. Expressed in roots, shoots, and panicle at flowering stage.

Its subcellular location is the vacuole membrane. High-affinity potassium transporter. The polypeptide is Potassium transporter 10 (HAK10) (Oryza sativa subsp. japonica (Rice)).